The primary structure comprises 207 residues: MPTNTVRCLRLLPLASVLLAACSVHQPTQTGKSPISPEWQQHQQKVQQLSQYQTRGAFAYISDSKRVSANFFWQDTPPQRYRLLLTNPLGSTELELRAQPDGVQITDNQGKRYVGKDAEYMIQQLTGMAIPLNNLRQWILGIPGDATEFTLDERYLLKTVTYRQGNQNWNVSYQSYNTELTPPLPTSLELVQGEQRIKLKMNNWMVK.

Positions 1-21 (MPTNTVRCLRLLPLASVLLAA) are cleaved as a signal peptide. Cysteine 22 carries the N-palmitoyl cysteine lipid modification. The S-diacylglycerol cysteine moiety is linked to residue cysteine 22.

The protein belongs to the LolB family. In terms of assembly, monomer.

It is found in the cell outer membrane. Functionally, plays a critical role in the incorporation of lipoproteins in the outer membrane after they are released by the LolA protein. This Pectobacterium carotovorum subsp. carotovorum (strain PC1) protein is Outer-membrane lipoprotein LolB.